The sequence spans 314 residues: Chitinase 1 (314 aa).

The first 26 residues, 1 to 26 (MASVSPSSLLLLFFALLSPLLPLTSA), serve as a signal peptide directing secretion. The region spanning 27-296 (LVFREYIGSQ…NVFRYEMQAQ (270 aa)) is the GH18 domain. The active-site Proton donor is Glu-151.

This sequence belongs to the glycosyl hydrolase 18 family. Chitinase class II subfamily.

It catalyses the reaction Random endo-hydrolysis of N-acetyl-beta-D-glucosaminide (1-&gt;4)-beta-linkages in chitin and chitodextrins.. In terms of biological role, able to cleave glycolchitin. This chain is Chitinase 1, found in Tulipa saxatilis subsp. bakeri (Tulip).